Consider the following 190-residue polypeptide: Ribosome maturation factor RimP (190 aa).

The tract at residues 159–190 (ELELAGGIPEGRVAPADADASEDEEVVEGLDK) is disordered. Acidic residues predominate over residues 177–190 (DASEDEEVVEGLDK).

It belongs to the RimP family.

It localises to the cytoplasm. Required for maturation of 30S ribosomal subunits. This chain is Ribosome maturation factor RimP, found in Rhodococcus opacus (strain B4).